A 282-amino-acid polypeptide reads, in one-letter code: 4-diphosphocytidyl-2-C-methyl-D-erythritol kinase (282 aa).

K13 is a catalytic residue. 96–106 serves as a coordination point for ATP; that stretch reads PMGGGIGGGSS. Residue D138 is part of the active site.

Belongs to the GHMP kinase family. IspE subfamily.

It carries out the reaction 4-CDP-2-C-methyl-D-erythritol + ATP = 4-CDP-2-C-methyl-D-erythritol 2-phosphate + ADP + H(+). It functions in the pathway isoprenoid biosynthesis; isopentenyl diphosphate biosynthesis via DXP pathway; isopentenyl diphosphate from 1-deoxy-D-xylulose 5-phosphate: step 3/6. Functionally, catalyzes the phosphorylation of the position 2 hydroxy group of 4-diphosphocytidyl-2C-methyl-D-erythritol. This Pseudomonas syringae pv. tomato (strain ATCC BAA-871 / DC3000) protein is 4-diphosphocytidyl-2-C-methyl-D-erythritol kinase.